The sequence spans 69 residues: Large ribosomal subunit protein bL28 (69 aa).

Belongs to the bacterial ribosomal protein bL28 family.

This is Large ribosomal subunit protein bL28 from Nitratidesulfovibrio vulgaris (strain DSM 19637 / Miyazaki F) (Desulfovibrio vulgaris).